We begin with the raw amino-acid sequence, 114 residues long: Large ribosomal subunit protein bL17 (114 aa).

Belongs to the bacterial ribosomal protein bL17 family. Part of the 50S ribosomal subunit. Contacts protein L32.

The chain is Large ribosomal subunit protein bL17 from Elusimicrobium minutum (strain Pei191).